The primary structure comprises 212 residues: Imidazole glycerol phosphate synthase subunit HisH (212 aa).

Residues 1 to 210 (MIAVINYGAG…VRWSEAVQPK (210 aa)) enclose the Glutamine amidotransferase type-1 domain. Cys79 functions as the Nucleophile in the catalytic mechanism. Residues His185 and Glu187 contribute to the active site.

As to quaternary structure, heterodimer of HisH and HisF.

Its subcellular location is the cytoplasm. It carries out the reaction 5-[(5-phospho-1-deoxy-D-ribulos-1-ylimino)methylamino]-1-(5-phospho-beta-D-ribosyl)imidazole-4-carboxamide + L-glutamine = D-erythro-1-(imidazol-4-yl)glycerol 3-phosphate + 5-amino-1-(5-phospho-beta-D-ribosyl)imidazole-4-carboxamide + L-glutamate + H(+). The enzyme catalyses L-glutamine + H2O = L-glutamate + NH4(+). It functions in the pathway amino-acid biosynthesis; L-histidine biosynthesis; L-histidine from 5-phospho-alpha-D-ribose 1-diphosphate: step 5/9. Functionally, IGPS catalyzes the conversion of PRFAR and glutamine to IGP, AICAR and glutamate. The HisH subunit catalyzes the hydrolysis of glutamine to glutamate and ammonia as part of the synthesis of IGP and AICAR. The resulting ammonia molecule is channeled to the active site of HisF. In Chloroflexus aurantiacus (strain ATCC 29364 / DSM 637 / Y-400-fl), this protein is Imidazole glycerol phosphate synthase subunit HisH.